A 480-amino-acid chain; its full sequence is MSPQTETKASVGFKAGVKDYKLTYYTPEYVPLDTDILAAFRVTPQPGVPSEEAGAAVAAESSTGTWTTVWTDGLTSLDRYKGRCYHIDPVPGEENQYICYVAYPLDLFEEGSVTNMFTSIVGNVFGFKALRALRLEDLRIPVAYIKTFQGPPHGIQVERDKLNKYGRPLLGCTIKPKLGLSAKNYGRAVYECLRGGLDFTKDDENVNSQPFMRWRDRFLFCAEAIYKAQAETGEIKGHYLNATAGTCEEMIKRAVFARELGVPIVMHDYLTGGFTANTSLAHYCRDNGLLLHIHRAMHAVIDRQKNHGMHFRVLAKALRLSGGDHIHAGTVVGKLEGERDITLGFVDLLRDDYTEIDADRGIYFTQSWVSTPGVLPVASGGIHVWHMPALTEIFGDDSVLQFGGGTLGHPWGNAPGAVANRVALEACVQARNEGRDLAREGATIIREAAKWSPELAAACEVWKEIKFEFPAVDVLDKAKK.

The propeptide occupies 1–2; sequence MS. Proline 3 is modified (N-acetylproline). The residue at position 14 (lysine 14) is an N6,N6,N6-trimethyllysine. Positions 123 and 173 each coordinate substrate. The active-site Proton acceptor is the lysine 175. Lysine 177 serves as a coordination point for substrate. 3 residues coordinate Mg(2+): lysine 201, aspartate 203, and glutamate 204. Lysine 201 carries the post-translational modification N6-carboxylysine. Residue histidine 294 is the Proton acceptor of the active site. Substrate is bound by residues arginine 295, histidine 327, and serine 379.

The protein belongs to the RuBisCO large chain family. Type I subfamily. As to quaternary structure, heterohexadecamer of 8 large chains and 8 small chains; disulfide-linked. The disulfide link is formed within the large subunit homodimers. Mg(2+) serves as cofactor. The disulfide bond which can form in the large chain dimeric partners within the hexadecamer appears to be associated with oxidative stress and protein turnover.

It localises to the plastid. The protein localises to the chloroplast. The catalysed reaction is 2 (2R)-3-phosphoglycerate + 2 H(+) = D-ribulose 1,5-bisphosphate + CO2 + H2O. It catalyses the reaction D-ribulose 1,5-bisphosphate + O2 = 2-phosphoglycolate + (2R)-3-phosphoglycerate + 2 H(+). In terms of biological role, ruBisCO catalyzes two reactions: the carboxylation of D-ribulose 1,5-bisphosphate, the primary event in carbon dioxide fixation, as well as the oxidative fragmentation of the pentose substrate in the photorespiration process. Both reactions occur simultaneously and in competition at the same active site. The chain is Ribulose bisphosphate carboxylase large chain from Mollugo verticillata (Green carpetweed).